An 80-amino-acid polypeptide reads, in one-letter code: Raniseptin-5 (80 aa).

Residues 1 to 22 form the signal peptide; that stretch reads MAFLKKSLFLVLFLGIVSLSIC. A propeptide spanning residues 23–49 is cleaved from the precursor; that stretch reads EEEKREGEEEEKQEEENEELSEEELRE.

Belongs to the frog skin active peptide (FSAP) family. Dermaseptin subfamily. Expressed by the skin glands.

It is found in the secreted. Has antibacterial activity. The polypeptide is Raniseptin-5 (Boana raniceps (Chaco tree frog)).